The sequence spans 227 residues: Cytidylate kinase (227 aa).

12 to 20 (GPGGAGKGT) provides a ligand contact to ATP.

Belongs to the cytidylate kinase family. Type 1 subfamily.

Its subcellular location is the cytoplasm. The enzyme catalyses CMP + ATP = CDP + ADP. It catalyses the reaction dCMP + ATP = dCDP + ADP. The protein is Cytidylate kinase of Klebsiella pneumoniae (strain 342).